A 230-amino-acid chain; its full sequence is Probable septum site-determining protein MinC (230 aa).

It belongs to the MinC family. As to quaternary structure, interacts with MinD and FtsZ.

Cell division inhibitor that blocks the formation of polar Z ring septums. Rapidly oscillates between the poles of the cell to destabilize FtsZ filaments that have formed before they mature into polar Z rings. Prevents FtsZ polymerization. The polypeptide is Probable septum site-determining protein MinC (Cronobacter sakazakii (strain ATCC BAA-894) (Enterobacter sakazakii)).